Reading from the N-terminus, the 90-residue chain is Small ribosomal subunit protein uS15 (90 aa).

It belongs to the universal ribosomal protein uS15 family. As to quaternary structure, part of the 30S ribosomal subunit. Forms a bridge to the 50S subunit in the 70S ribosome, contacting the 23S rRNA.

Functionally, one of the primary rRNA binding proteins, it binds directly to 16S rRNA where it helps nucleate assembly of the platform of the 30S subunit by binding and bridging several RNA helices of the 16S rRNA. Forms an intersubunit bridge (bridge B4) with the 23S rRNA of the 50S subunit in the ribosome. The sequence is that of Small ribosomal subunit protein uS15 from Wolinella succinogenes (strain ATCC 29543 / DSM 1740 / CCUG 13145 / JCM 31913 / LMG 7466 / NCTC 11488 / FDC 602W) (Vibrio succinogenes).